The following is a 34-amino-acid chain: Photosystem II reaction center protein M (34 aa).

A helical transmembrane segment spans residues 5 to 25 (ILAFIATALFILVPTAFLLII).

Belongs to the PsbM family. In terms of assembly, PSII is composed of 1 copy each of membrane proteins PsbA, PsbB, PsbC, PsbD, PsbE, PsbF, PsbH, PsbI, PsbJ, PsbK, PsbL, PsbM, PsbT, PsbX, PsbY, PsbZ, Psb30/Ycf12, at least 3 peripheral proteins of the oxygen-evolving complex and a large number of cofactors. It forms dimeric complexes.

It is found in the plastid. The protein resides in the chloroplast thylakoid membrane. Its function is as follows. One of the components of the core complex of photosystem II (PSII). PSII is a light-driven water:plastoquinone oxidoreductase that uses light energy to abstract electrons from H(2)O, generating O(2) and a proton gradient subsequently used for ATP formation. It consists of a core antenna complex that captures photons, and an electron transfer chain that converts photonic excitation into a charge separation. This subunit is found at the monomer-monomer interface. This chain is Photosystem II reaction center protein M, found in Cenchrus americanus (Pearl millet).